The primary structure comprises 319 residues: Putative peptide permease protein BRA0408/BS1330_II0405 (319 aa).

Helical transmembrane passes span 9-29, 102-122, 138-158, 182-202, 242-262, and 284-304; these read LLIGLGMLLALTILIFVLLQL, LLLMAAGLAIAIVIGVTTGII, LALLGISSPAFLTALLGLYVF, LLRHLALPALVLSIGHAALIM, LPVVTLIGSTIGLAVGGAIFI, and YPVIMGATLVIGACVIIVNIL. In terms of domain architecture, ABC transmembrane type-1 spans 98 to 305; that stretch reads IGPTLLLMAA…ACVIIVNILT (208 aa).

The protein belongs to the binding-protein-dependent transport system permease family. As to quaternary structure, the complex is composed of two ATP-binding proteins (BRA0404 and BRA0405), two transmembrane proteins (BRA0407 and BRA0408) and a solute-binding protein (BRA0409).

Its subcellular location is the cell inner membrane. In terms of biological role, probably part of an ABC transporter complex that could be involved in peptide import. Probably responsible for the translocation of the substrate across the membrane. The sequence is that of Putative peptide permease protein BRA0408/BS1330_II0405 from Brucella suis biovar 1 (strain 1330).